The primary structure comprises 370 residues: S-adenosylmethionine decarboxylase proenzyme (370 aa).

Phe28 lines the substrate pocket. Active-site residues include Glu29 and Glu32. A substrate-binding site is contributed by Glu85. Ser86 (schiff-base intermediate with substrate; via pyruvic acid) is an active-site residue. Ser86 carries the post-translational modification Pyruvic acid (Ser); by autocatalysis. The active-site Proton donor; for catalytic activity is Cys100. Residues Ser250 and His263 each act as proton acceptor; for processing activity in the active site. Position 267 (Glu267) interacts with substrate.

The protein belongs to the eukaryotic AdoMetDC family. As to quaternary structure, forms a heterodimer with catalytically inactive AdoMetDC prozyme; heterodimerization is required to activate AdoMetDC. It depends on pyruvate as a cofactor. Is synthesized initially as an inactive proenzyme. Formation of the active enzyme involves a self-maturation process in which the active site pyruvoyl group is generated from an internal serine residue via an autocatalytic post-translational modification. Two non-identical subunits are generated from the proenzyme in this reaction, and the pyruvate is formed at the N-terminus of the alpha chain, which is derived from the carboxyl end of the proenzyme. The post-translation cleavage follows an unusual pathway, termed non-hydrolytic serinolysis, in which the side chain hydroxyl group of the serine supplies its oxygen atom to form the C-terminus of the beta chain, while the remainder of the serine residue undergoes an oxidative deamination to the alpha chain.

The catalysed reaction is S-adenosyl-L-methionine + H(+) = S-adenosyl 3-(methylsulfanyl)propylamine + CO2. It participates in amine and polyamine biosynthesis; S-adenosylmethioninamine biosynthesis; S-adenosylmethioninamine from S-adenosyl-L-methionine: step 1/1. Allosterically activated by AdoMetDC prozyme. Activated by putrescine. Inhibited by spermine and methylglyoxal-bis(guanylhydrazone) (MGBG) and slightly by spermidine. Inhibited by 5'-([(Z)-4-amino-2-butenyl]methylamino)-5'-deoxyadenosine (MDL 73811). Functionally, probably in association with catalytically inactive AdoMetDC prozyme, catalyzes the decarboxylation of S-adenosyl-L-methionine which is essential for the biosynthesis of the polyamine spermidine. Required for growth and survival during the bloodstream life cycle stage. The protein is S-adenosylmethionine decarboxylase proenzyme of Trypanosoma cruzi.